A 144-amino-acid chain; its full sequence is Ig heavy chain V region MOPC 141 (144 aa).

The N-terminal stretch at 1–19 (MAVLALLFCLATFPSCILS) is a signal peptide. Residues 20–130 (QVQLKESGPG…YYGRSDKYFT (111 aa)) form the Ig-like domain.

This is Ig heavy chain V region MOPC 141 from Mus musculus (Mouse).